The sequence spans 128 residues: Sulfurtransferase TusD (128 aa).

Catalysis depends on cysteine 78, which acts as the Cysteine persulfide intermediate.

This sequence belongs to the DsrE/TusD family. In terms of assembly, heterohexamer, formed by a dimer of trimers. The hexameric TusBCD complex contains 2 copies each of TusB, TusC and TusD. The TusBCD complex interacts with TusE.

It is found in the cytoplasm. Part of a sulfur-relay system required for 2-thiolation of 5-methylaminomethyl-2-thiouridine (mnm(5)s(2)U) at tRNA wobble positions. Accepts sulfur from TusA and transfers it in turn to TusE. The sequence is that of Sulfurtransferase TusD from Cronobacter sakazakii (strain ATCC BAA-894) (Enterobacter sakazakii).